A 241-amino-acid polypeptide reads, in one-letter code: MADS-box transcription factor 57 (241 aa).

Residues 1 to 61 (MGRGKIVIRR…GRLYEFSSTN (61 aa)) enclose the MADS-box domain. The region spanning 85-178 (IKIWQREAAS…LNVMSQQKLE (94 aa)) is the K-box domain. The tract at residues 216 to 241 (LELSQSQQREGECSKTAAPELGLHLP) is disordered.

As to quaternary structure, interacts with TB1. As to expression, expressed in seedling roots and shoots. Highly expressed in young leaves.

The protein resides in the nucleus. Its function is as follows. Transcriptional factor that targets the CArG motif 5'-C(A/T)TTAAAAAG-3' in the promoter of D14. Directly suppresses D14 expression to control the outgrowth of axillary buds. The polypeptide is MADS-box transcription factor 57 (Oryza sativa subsp. japonica (Rice)).